A 943-amino-acid polypeptide reads, in one-letter code: AP-1 complex subunit beta-1 (943 aa).

N6-acetyllysine is present on lysine 318. The residue at position 574 (tyrosine 574) is a 3'-nitrotyrosine. Residues 584–621 (GGRGVVHKSLPPRTASSESTESPETAPAGAPAGDQPDV) form a disordered region. A compositionally biased stretch (low complexity) spans 594–616 (PPRTASSESTESPETAPAGAPAG).

Belongs to the adaptor complexes large subunit family. Adaptor protein complex 1 (AP-1) is a heterotetramer composed of two large adaptins (gamma-type subunit AP1G1 and beta-type subunit AP1B1), a medium adaptin (mu-type subunit AP1M1 or AP1M2) and a small adaptin (sigma-type subunit AP1S1 or AP1S2 or AP1S3). As to expression, widely expressed.

Its subcellular location is the cytoplasmic vesicle. The protein resides in the clathrin-coated vesicle membrane. It is found in the golgi apparatus. Functionally, subunit of clathrin-associated adaptor protein complex 1 that plays a role in protein sorting in the late-Golgi/trans-Golgi network (TGN) and/or endosomes. The AP complexes mediate both the recruitment of clathrin to membranes and the recognition of sorting signals within the cytosolic tails of transmembrane cargo molecules. The protein is AP-1 complex subunit beta-1 (Ap1b1) of Mus musculus (Mouse).